Reading from the N-terminus, the 196-residue chain is Interferon lambda-3 (196 aa).

Residues 1-21 (MTGDCMPVLVLMAAVLTVTGA) form the signal peptide. Cystine bridges form between Cys37-Cys136, Cys71-Cys169, and Cys188-Cys195.

The protein belongs to the lambda interferon family.

It is found in the secreted. In terms of biological role, cytokine with antiviral, antitumour and immunomodulatory activities. Plays a critical role in the antiviral host defense, predominantly in the epithelial tissues. Acts as a ligand for the heterodimeric class II cytokine receptor composed of IL10RB and IFNLR1, and receptor engagement leads to the activation of the JAK/STAT signaling pathway resulting in the expression of IFN-stimulated genes (ISG), which mediate the antiviral state. Has a restricted receptor distribution and therefore restricted targets: is primarily active in epithelial cells and this cell type-selective action is because of the epithelial cell-specific expression of its receptor IFNLR1. Seems not to be essential for early virus-activated host defense in vaginal infection, but plays an important role in Toll-like receptor (TLR)-induced antiviral defense. Plays a significant role in the antiviral immune defense in the intestinal epithelium. Exerts an immunomodulatory effect by up-regulating MHC class I antigen expression. This is Interferon lambda-3 (IFNL3) from Homo sapiens (Human).